A 225-amino-acid polypeptide reads, in one-letter code: pH-response regulator palI/RIM9 homolog 2 (225 aa).

At 1 to 4 the chain is on the cytoplasmic side; the sequence is MLVK. Residues 5-25 traverse the membrane as a helical segment; sequence IVLVVLLTLALVFECFSTISV. At 26–87 the chain is on the extracellular side; that stretch reads PITIGLYISE…PNHAKYALSN (62 aa). Residues 88–108 form a helical membrane-spanning segment; the sequence is LLLVHVLAFVCVTILWVFGML. At 109–120 the chain is on the cytoplasmic side; that stretch reads TCFRCIKTSRRM. The chain crosses the membrane as a helical span at residues 121–141; that stretch reads LIIAVLWSMLTFMVTLLGFLI. The Extracellular segment spans residues 142–153; sequence DILIFSSHVTWC. The helical transmembrane segment at 154-174 threads the bilayer; it reads TWLTLASAFFTVLSGTVLCVM. Residues 175–225 lie on the Cytoplasmic side of the membrane; it reads RRNLTYDKFLESKPEKHGVYVPLCRLNDVEELEIPWCNTMNHQALTAPTPM.

Belongs to the palI/RIM9 family.

It localises to the cell membrane. Functionally, required for the proteolytic cleavage of the transcription factor RIM101 in response to alkaline ambient pH. The protein is pH-response regulator palI/RIM9 homolog 2 of Kluyveromyces lactis (strain ATCC 8585 / CBS 2359 / DSM 70799 / NBRC 1267 / NRRL Y-1140 / WM37) (Yeast).